Here is a 613-residue protein sequence, read N- to C-terminus: MSAGAGTPRRPAVRGSAPHPARGSAPGPRPMPTHHPTRGDKKRARRPGVPTRGDKKRAPRLGVPARGDKKRARRPGVPAREDKKRAPRPGVPTRGDKKRAPRLGVPARGDKKRARRPGVPTRGGVARSGNDGPRVPLALLGAYYPGHVTIRLYDTSARQIRDFAPLTPGCVSIYLCGATVQAAPHIGHIRSGLNFDIMRRWFAYRGYDVTFVRNVTDIDDKIIRKAAEQNRPWWSIGYENERAFNDAYAALGCLPPTYEPRATGHITEMVEMMRGLIERGHAYEADGNVYFDVRSLPGYLSLSNQDLDELRQPSEDGETGKRDLRDFAMWKAAKPGEPSWETPWGRGRPGWHLECSAMAHKYLGEEFDIHGGGIDLIFPHHENEIAQAKGFGDAFARYWVHNAWVTMSGEKMSKSLGNSVLVSEMVKKWPPVVLRYYLGTPHYRSTIEYSEESLREAESAYGRIEGFVQRVTELAGHAVEPAAEVPPAFAEAMDDDLGVPQALAIVHTTVRQGNSALAADDKDAAVARLAEVRAMLGVLGLDPLDAQWAGAQAQGEDLRHVVDSLVRLVLDQREGARARKDWATADAIRDQLGQSGLVIEDSPQGPRWSLGSR.

Residues 1–130 (MSAGAGTPRR…TRGGVARSGN (130 aa)) form a disordered region. 6 consecutive repeat copies span residues 36–49 (PTRG…RPGV), 50–63 (PTRG…RLGV), 64–77 (PARG…RPGV), 78–91 (PARE…RPGV), 92–105 (PTRG…RLGV), and 106–119 (PARG…RPGV). Positions 36–119 (PTRGDKKRAR…DKKRARRPGV (84 aa)) are 6 X 14 AA tandem repeats of P-[TA]-R-G-D-K-K-R-A-[RP]-R-[PL]-G-V. Positions 148–613 (VTIRLYDTSA…QGPRWSLGSR (466 aa)) are cysteinyl-tRNA synthetase. C176 contacts Zn(2+). Residues 178–188 (ATVQAAPHIGH) carry the 'HIGH' region motif. Zn(2+) contacts are provided by C355, H380, and E384. Residues 411–415 (KMSKS) carry the 'KMSKS' region motif. K414 is a binding site for ATP.

It belongs to the class-I aminoacyl-tRNA synthetase family. As to quaternary structure, monomer. Requires Zn(2+) as cofactor.

Its subcellular location is the cytoplasm. The enzyme catalyses tRNA(Cys) + L-cysteine + ATP = L-cysteinyl-tRNA(Cys) + AMP + diphosphate. This chain is Cysteine--tRNA ligase, found in Streptomyces coelicolor (strain ATCC BAA-471 / A3(2) / M145).